The primary structure comprises 177 residues: ATP-dependent protease subunit HslV (177 aa).

Thr-4 is an active-site residue. Na(+) is bound by residues Ser-159, Cys-162, and Thr-165.

Belongs to the peptidase T1B family. HslV subfamily. In terms of assembly, a double ring-shaped homohexamer of HslV is capped on each side by a ring-shaped HslU homohexamer. The assembly of the HslU/HslV complex is dependent on binding of ATP.

It is found in the cytoplasm. The catalysed reaction is ATP-dependent cleavage of peptide bonds with broad specificity.. With respect to regulation, allosterically activated by HslU binding. Its function is as follows. Protease subunit of a proteasome-like degradation complex believed to be a general protein degrading machinery. The polypeptide is ATP-dependent protease subunit HslV (Mesorhizobium japonicum (strain LMG 29417 / CECT 9101 / MAFF 303099) (Mesorhizobium loti (strain MAFF 303099))).